The primary structure comprises 80 residues: MATKKPENLSFEQALEELTTIVSEMEQGDLSLEQSLKQFERGIALAGASSSKLQQAEQKVAILMGKDEKSVLTDFDNDME.

This sequence belongs to the XseB family. Heterooligomer composed of large and small subunits.

Its subcellular location is the cytoplasm. The catalysed reaction is Exonucleolytic cleavage in either 5'- to 3'- or 3'- to 5'-direction to yield nucleoside 5'-phosphates.. Functionally, bidirectionally degrades single-stranded DNA into large acid-insoluble oligonucleotides, which are then degraded further into small acid-soluble oligonucleotides. The polypeptide is Exodeoxyribonuclease 7 small subunit (Pseudoalteromonas translucida (strain TAC 125)).